We begin with the raw amino-acid sequence, 511 residues long: Synaptotagmin-6 (511 aa).

The Vesicular portion of the chain corresponds to 1–59; that stretch reads MSGVWGAGGPRCQAALAVLASLCRARPPPLGLDVETCRSFELQSPEQSPSAADSGTSVS. The cysteine motif stretch occupies residues 12–38; sequence CQAALAVLASLCRARPPPLGLDVETCR. The helical transmembrane segment at 60 to 80 threads the bilayer; the sequence is LLAVVVIVCGVALVAVFLFLF. At 81–511 the chain is on the cytoplasmic side; sequence WKLCWMPWRK…KSFKEGTPRL (431 aa). Disordered regions lie at residues 92–119 and 157–182; these read EASSPSSANPASETLQSPSSRGNMADKL and TKLQRQTTEPASSTRHTSFKRHLPRQ. The segment covering 94–103 has biased composition (low complexity); it reads SSPSSANPAS. Polar residues-rich tracts occupy residues 104–113 and 160–172; these read ETLQSPSSRG and QRQTTEPASSTRH. The residue at position 217 (serine 217) is a Phosphoserine. 2 consecutive C2 domains span residues 230 to 351 and 362 to 495; these read SCGK…SIWK and DLGE…AHWH. The Ca(2+) site is built by aspartate 261, aspartate 267, aspartate 319, phenylalanine 320, aspartate 321, serine 324, aspartate 327, aspartate 393, aspartate 399, aspartate 453, and aspartate 455. A necessary for cell membrane association (isoform 2) region spans residues 483–511; sequence MLAYPRKPIAHWHSLVEVKKSFKEGTPRL.

This sequence belongs to the synaptotagmin family. Isoform 1: Homodimer; disulfide-linked via the cysteine motif. Isoform 1: Can also form heterodimers with SYT3, SYT7, SYT9 and SYT10. Isoform 1: Interacts with STX1A, STX1B and STX2; the interaction is Ca(2+)-dependent. Isoform 2: Is not able to form homodimer and heterodimers. It depends on Ca(2+) as a cofactor. In terms of tissue distribution, isoform 1 is expressed in the olfactory bulb. Isoform 2 is expressed in the brain (at protein level).

It localises to the cytoplasmic vesicle. It is found in the secretory vesicle. The protein localises to the synaptic vesicle membrane. The protein resides in the membrane. Its subcellular location is the cytoplasm. It localises to the cytosol. It is found in the cell membrane. Its function is as follows. May be involved in Ca(2+)-dependent exocytosis of secretory vesicles through Ca(2+) and phospholipid binding to the C2 domain or may serve as Ca(2+) sensors in the process of vesicular trafficking and exocytosis. May mediate Ca(2+)-regulation of exocytosis in acrosomal reaction in sperm. The polypeptide is Synaptotagmin-6 (Syt6) (Mus musculus (Mouse)).